Reading from the N-terminus, the 464-residue chain is MSNIGKVVQVIGPVVDIKFDEENLPDIYNAISIESGNAKIITEVAQHLGDDIVRTISMESTDGLMRGMDALDIGAPISVPVGKPVLGRLFNMLGQPIDENGEVEADEYSPIHRPAPSFEDQSVKPEMFETGIKVIDLIAPYQKGGKIGLFGGAGVGKTVIIQELINNIAKEHGGLSVFTGVGERTREGNDLYYEMQESGVINKTALVFGQMNEPPGARMRVALTGLTMAEHFRDEGQDVLLFIDNIFRFTQAGSEVSALLGRIPSAVGYQPTLATEMGSLQERITSTKHGSITSVQAVYVPADDLTDPAPATTFTHLDATTVLSRSISEIGIYPAVDPLASTSRILDPRVVGEEHYKVASDVKHILERYSELQDIIAILGVDELSEEDRLVVIRARRIQRFLSQPFSVAEQFTGYEGKYVPIKETIRGFKEILEGKYDDLPETAFLFKGSIDEVIESAKNMVKS.

Position 151–158 (151–158 (GGAGVGKT)) interacts with ATP.

Belongs to the ATPase alpha/beta chains family. As to quaternary structure, F-type ATPases have 2 components, CF(1) - the catalytic core - and CF(0) - the membrane proton channel. CF(1) has five subunits: alpha(3), beta(3), gamma(1), delta(1), epsilon(1). CF(0) has three main subunits: a(1), b(2) and c(9-12). The alpha and beta chains form an alternating ring which encloses part of the gamma chain. CF(1) is attached to CF(0) by a central stalk formed by the gamma and epsilon chains, while a peripheral stalk is formed by the delta and b chains.

Its subcellular location is the cell membrane. It catalyses the reaction ATP + H2O + 4 H(+)(in) = ADP + phosphate + 5 H(+)(out). In terms of biological role, produces ATP from ADP in the presence of a proton gradient across the membrane. The catalytic sites are hosted primarily by the beta subunits. This Clostridium kluyveri (strain ATCC 8527 / DSM 555 / NBRC 12016 / NCIMB 10680 / K1) protein is ATP synthase subunit beta.